The primary structure comprises 182 residues: NADH-quinone oxidoreductase subunit B 1 (182 aa).

Cysteine 47, cysteine 48, cysteine 113, and cysteine 142 together coordinate [4Fe-4S] cluster.

It belongs to the complex I 20 kDa subunit family. As to quaternary structure, NDH-1 is composed of 14 different subunits. Subunits NuoB, C, D, E, F, and G constitute the peripheral sector of the complex. Requires [4Fe-4S] cluster as cofactor.

The protein localises to the cell inner membrane. It carries out the reaction a quinone + NADH + 5 H(+)(in) = a quinol + NAD(+) + 4 H(+)(out). Its function is as follows. NDH-1 shuttles electrons from NADH, via FMN and iron-sulfur (Fe-S) centers, to quinones in the respiratory chain. Couples the redox reaction to proton translocation (for every two electrons transferred, four hydrogen ions are translocated across the cytoplasmic membrane), and thus conserves the redox energy in a proton gradient. This Anaeromyxobacter dehalogenans (strain 2CP-C) protein is NADH-quinone oxidoreductase subunit B 1.